The primary structure comprises 304 residues: Acetylglutamate kinase (304 aa).

Residues 69–70 (GG), R91, and N202 each bind substrate.

Belongs to the acetylglutamate kinase family. ArgB subfamily.

Its subcellular location is the cytoplasm. It carries out the reaction N-acetyl-L-glutamate + ATP = N-acetyl-L-glutamyl 5-phosphate + ADP. The protein operates within amino-acid biosynthesis; L-arginine biosynthesis; N(2)-acetyl-L-ornithine from L-glutamate: step 2/4. Functionally, catalyzes the ATP-dependent phosphorylation of N-acetyl-L-glutamate. This Caulobacter vibrioides (strain ATCC 19089 / CIP 103742 / CB 15) (Caulobacter crescentus) protein is Acetylglutamate kinase.